The primary structure comprises 555 residues: CTL-like protein DDB_G0274487 (555 aa).

Polar residues predominate over residues 1-17 (MGIEDNSQQPNTGSPYG). A disordered region spans residues 1–101 (MGIEDNSQQP…NLNKANDRES (101 aa)). The segment covering 19-63 (SPPSQYNPYGQQPPQQQQYNPYGEQQQQPQQQQQYGYQPQFQPTY) has biased composition (low complexity). Over residues 79 to 90 (PFPPQQQQPPPI) the composition is skewed to pro residues. The N-linked (GlcNAc...) asparagine glycan is linked to asparagine 116. Residues 138–158 (IWFSILFGLNFGLLIVVSASA) traverse the membrane as a helical segment. An N-linked (GlcNAc...) asparagine glycan is attached at asparagine 174. The next 10 helical transmembrane spans lie at 182 to 202 (FLFAILPFTIVFSLLYIWAWL), 210 to 230 (ESLIKYSFFGAMGLMIGYCVF), 231 to 251 (FFVWGAIYLGIIFAIMAFFII), 284 to 304 (AGYVSIFINFVWFIVWGSAFA), 313 to 333 (AIQTCINIYLVFTLYWVFHVI), 340 to 360 (TVSGLLATWYFCSGPNGVGMP), 372 to 392 (LTTSFGSICFGSLIISLIETL), 405 to 425 (VVVKIIGYIFNCILSMLSSIV), 472 to 492 (IAIGGLVASLLLSILGALISI), and 493 to 513 (PFDMSVYGGALALFIGYLVII).

This sequence belongs to the CTL (choline transporter-like) family.

Its subcellular location is the membrane. This Dictyostelium discoideum (Social amoeba) protein is CTL-like protein DDB_G0274487.